Here is a 290-residue protein sequence, read N- to C-terminus: Light-independent protochlorophyllide reductase iron-sulfur ATP-binding protein (290 aa).

ATP contacts are provided by residues 10–15 (GIGKST) and K39. S14 lines the Mg(2+) pocket. The [4Fe-4S] cluster site is built by C95 and C129. Residue 180–181 (NR) participates in ATP binding.

The protein belongs to the NifH/BchL/ChlL family. Homodimer. Protochlorophyllide reductase is composed of three subunits; ChlL, ChlN and ChlB. It depends on [4Fe-4S] cluster as a cofactor.

It is found in the plastid. It localises to the chloroplast. The catalysed reaction is chlorophyllide a + oxidized 2[4Fe-4S]-[ferredoxin] + 2 ADP + 2 phosphate = protochlorophyllide a + reduced 2[4Fe-4S]-[ferredoxin] + 2 ATP + 2 H2O. Its pathway is porphyrin-containing compound metabolism; chlorophyll biosynthesis (light-independent). Functionally, component of the dark-operative protochlorophyllide reductase (DPOR) that uses Mg-ATP and reduced ferredoxin to reduce ring D of protochlorophyllide (Pchlide) to form chlorophyllide a (Chlide). This reaction is light-independent. The L component serves as a unique electron donor to the NB-component of the complex, and binds Mg-ATP. The polypeptide is Light-independent protochlorophyllide reductase iron-sulfur ATP-binding protein (Anthoceros angustus (Hornwort)).